Consider the following 227-residue polypeptide: Cytidylate kinase (227 aa).

Gly-12–Thr-20 contributes to the ATP binding site.

The protein belongs to the cytidylate kinase family. Type 1 subfamily.

It localises to the cytoplasm. It carries out the reaction CMP + ATP = CDP + ADP. The enzyme catalyses dCMP + ATP = dCDP + ADP. This is Cytidylate kinase from Nitrosococcus oceani (strain ATCC 19707 / BCRC 17464 / JCM 30415 / NCIMB 11848 / C-107).